The following is a 153-amino-acid chain: Glutamyl-tRNA(Gln) amidotransferase subunit C, mitochondrial (153 aa).

A disordered region spans residues 31 to 55; it reads HPTKVPQQPEPNAFPDLDNNTDDDP.

It belongs to the GatC family. As to quaternary structure, subunit of the heterotrimeric GatCAB amidotransferase (AdT) complex, composed of A, B and C subunits.

It localises to the mitochondrion. It catalyses the reaction L-glutamyl-tRNA(Gln) + L-glutamine + ATP + H2O = L-glutaminyl-tRNA(Gln) + L-glutamate + ADP + phosphate + H(+). Functionally, allows the formation of correctly charged Gln-tRNA(Gln) through the transamidation of misacylated Glu-tRNA(Gln) in the mitochondria. The reaction takes place in the presence of glutamine and ATP through an activated gamma-phospho-Glu-tRNA(Gln). The sequence is that of Glutamyl-tRNA(Gln) amidotransferase subunit C, mitochondrial from Drosophila willistoni (Fruit fly).